A 337-amino-acid polypeptide reads, in one-letter code: Protein EXORDIUM-like 3 (337 aa).

The first 25 residues, 1–25, serve as a signal peptide directing secretion; the sequence is MHSLPVNLVLTVLTVFLTSPAQVIG. N-linked (GlcNAc...) asparagine glycosylation is found at Asn34, Asn66, and Asn119.

This sequence belongs to the EXORDIUM family.

It localises to the secreted. The protein localises to the extracellular space. It is found in the apoplast. Its function is as follows. May play a role in a brassinosteroid-dependent regulation of growth and development. The chain is Protein EXORDIUM-like 3 (EXL3) from Arabidopsis thaliana (Mouse-ear cress).